Reading from the N-terminus, the 99-residue chain is DASH complex subunit DAD1 (99 aa).

The disordered stretch occupies residues 69–99 (GMNHQTRENTRDENNKISSSDTEDENNNNKI). Positions 73 to 83 (QTRENTRDENN) are enriched in basic and acidic residues. A compositionally biased stretch (acidic residues) spans 89 to 99 (DTEDENNNNKI).

It belongs to the DASH complex DAD1 family. Component of the DASH complex consisting of ASK1, DAD1, DAD2, DAD3, DAD4, DAM1, DUO1, HSK3, SPC19 and SPC34, with a stoichiometry of one copy of each subunit per complex. Multiple DASH complexes oligomerize to form a ring that encircles spindle microtubules and organizes the rod-like NDC80 complexes of the outer kinetochore. DASH complex oligomerization strengthens microtubule attachments. On cytoplasmic microtubules, DASH complexes appear to form patches instead of rings.

The protein resides in the chromosome. The protein localises to the centromere. Its subcellular location is the kinetochore. It localises to the cytoplasm. It is found in the cytoskeleton. The protein resides in the spindle. The protein localises to the nucleus. Component of the DASH complex that connects microtubules with kinetochores and couples microtubule depolymerisation to chromosome movement; it is involved in retrieving kinetochores to the spindle poles before their re-orientation on the spindle in early mitosis and allows microtubule depolymerization to pull chromosomes apart and resist detachment during anaphase. Kinetochores, consisting of a centromere-associated inner segment and a microtubule-contacting outer segment, play a crucial role in chromosome segregation by mediating the physical connection between centromeric DNA and microtubules. Kinetochores also serve as an input point for the spindle assembly checkpoint, which delays anaphase until all chromosomes have bioriented on the mitotic spindle. This chain is DASH complex subunit DAD1, found in Candida albicans (strain SC5314 / ATCC MYA-2876) (Yeast).